The primary structure comprises 104 residues: Large ribosomal subunit protein uL24 (104 aa).

This sequence belongs to the universal ribosomal protein uL24 family. Part of the 50S ribosomal subunit.

Its function is as follows. One of two assembly initiator proteins, it binds directly to the 5'-end of the 23S rRNA, where it nucleates assembly of the 50S subunit. In terms of biological role, one of the proteins that surrounds the polypeptide exit tunnel on the outside of the subunit. The polypeptide is Large ribosomal subunit protein uL24 (Yersinia enterocolitica serotype O:8 / biotype 1B (strain NCTC 13174 / 8081)).